A 103-amino-acid chain; its full sequence is NADH-quinone oxidoreductase subunit K (103 aa).

The next 3 helical transmembrane spans lie at 5–25 (VPTS…LIGV), 32–52 (ILIF…LVAF), and 66–86 (FIVM…IVAI).

The protein belongs to the complex I subunit 4L family. In terms of assembly, NDH-1 is composed of 15 different subunits. Subunits NuoA, H, J, K, L, M, N constitute the membrane sector of the complex.

The protein localises to the cell membrane. It catalyses the reaction a quinone + NADH + 5 H(+)(in) = a quinol + NAD(+) + 4 H(+)(out). In terms of biological role, NDH-1 shuttles electrons from NADH, via FMN and iron-sulfur (Fe-S) centers, to quinones in the respiratory chain. The immediate electron acceptor for the enzyme in this species is believed to be a menaquinone. Couples the redox reaction to proton translocation (for every two electrons transferred, four hydrogen ions are translocated across the cytoplasmic membrane), and thus conserves the redox energy in a proton gradient. This chain is NADH-quinone oxidoreductase subunit K, found in Deinococcus radiodurans (strain ATCC 13939 / DSM 20539 / JCM 16871 / CCUG 27074 / LMG 4051 / NBRC 15346 / NCIMB 9279 / VKM B-1422 / R1).